Consider the following 124-residue polypeptide: UPF0357 protein C1687.07 (124 aa).

Positions 1 to 24 (MASFHIIVSYVTVVLAIIIAITFA) are cleaved as a signal peptide.

It belongs to the UPF0357 family.

The protein is UPF0357 protein C1687.07 of Schizosaccharomyces pombe (strain 972 / ATCC 24843) (Fission yeast).